Here is a 354-residue protein sequence, read N- to C-terminus: Methylthioribose-1-phosphate isomerase (354 aa).

Substrate contacts are provided by residues arginine 58–alanine 60, arginine 101, and glutamine 204. Residue aspartate 245 is the Proton donor of the active site. Position 255–256 (asparagine 255–lysine 256) interacts with substrate.

The protein belongs to the eIF-2B alpha/beta/delta subunits family. MtnA subfamily.

The catalysed reaction is 5-(methylsulfanyl)-alpha-D-ribose 1-phosphate = 5-(methylsulfanyl)-D-ribulose 1-phosphate. The protein operates within amino-acid biosynthesis; L-methionine biosynthesis via salvage pathway; L-methionine from S-methyl-5-thio-alpha-D-ribose 1-phosphate: step 1/6. Its function is as follows. Catalyzes the interconversion of methylthioribose-1-phosphate (MTR-1-P) into methylthioribulose-1-phosphate (MTRu-1-P). This chain is Methylthioribose-1-phosphate isomerase, found in Xanthomonas axonopodis pv. citri (strain 306).